The chain runs to 410 residues: Chorismate synthase (410 aa).

Residues Arg40 and Arg46 each coordinate NADP(+). FMN-binding positions include 129-131 (RSS), 257-258 (QA), Gly302, 317-321 (KPISS), and Arg343.

Belongs to the chorismate synthase family. As to quaternary structure, homotetramer. FMNH2 serves as cofactor.

It carries out the reaction 5-O-(1-carboxyvinyl)-3-phosphoshikimate = chorismate + phosphate. The protein operates within metabolic intermediate biosynthesis; chorismate biosynthesis; chorismate from D-erythrose 4-phosphate and phosphoenolpyruvate: step 7/7. In terms of biological role, catalyzes the anti-1,4-elimination of the C-3 phosphate and the C-6 proR hydrogen from 5-enolpyruvylshikimate-3-phosphate (EPSP) to yield chorismate, which is the branch point compound that serves as the starting substrate for the three terminal pathways of aromatic amino acid biosynthesis. This reaction introduces a second double bond into the aromatic ring system. The protein is Chorismate synthase of Chlorobaculum parvum (strain DSM 263 / NCIMB 8327) (Chlorobium vibrioforme subsp. thiosulfatophilum).